The primary structure comprises 312 residues: Protoheme IX farnesyltransferase (312 aa).

The next 8 helical transmembrane spans lie at 33–53 (VMLL…VSIN), 54–74 (PLYG…AGAL), 105–125 (FIFG…FVNW), 126–146 (FAAL…TIWL), 154–174 (IVIG…AATG), 181–201 (FLLF…LSLF), 243–263 (IIGF…IIFI), and 291–311 (FYLA…CFII).

Belongs to the UbiA prenyltransferase family. Protoheme IX farnesyltransferase subfamily.

The protein localises to the cell inner membrane. It catalyses the reaction heme b + (2E,6E)-farnesyl diphosphate + H2O = Fe(II)-heme o + diphosphate. The protein operates within porphyrin-containing compound metabolism; heme O biosynthesis; heme O from protoheme: step 1/1. Converts heme B (protoheme IX) to heme O by substitution of the vinyl group on carbon 2 of heme B porphyrin ring with a hydroxyethyl farnesyl side group. In Bartonella henselae (strain ATCC 49882 / DSM 28221 / CCUG 30454 / Houston 1) (Rochalimaea henselae), this protein is Protoheme IX farnesyltransferase.